The chain runs to 512 residues: D-alanine--D-alanyl carrier protein ligase (512 aa).

An ATP-binding site is contributed by Thr-152–Ser-153. Asp-199 lines the D-alanine pocket. Asn-294–Thr-299 is a binding site for ATP. A D-alanine-binding site is contributed by Val-303. ATP contacts are provided by residues Asp-385, Tyr-397 to Arg-400, and Lys-499. Lys-499 is a D-alanine binding site.

Belongs to the ATP-dependent AMP-binding enzyme family. DltA subfamily.

It is found in the cytoplasm. The catalysed reaction is holo-[D-alanyl-carrier protein] + D-alanine + ATP = D-alanyl-[D-alanyl-carrier protein] + AMP + diphosphate. Its pathway is cell wall biogenesis; lipoteichoic acid biosynthesis. Catalyzes the first step in the D-alanylation of lipoteichoic acid (LTA), the activation of D-alanine and its transfer onto the D-alanyl carrier protein (Dcp) DltC. In an ATP-dependent two-step reaction, forms a high energy D-alanyl-AMP intermediate, followed by transfer of the D-alanyl residue as a thiol ester to the phosphopantheinyl prosthetic group of the Dcp. D-alanylation of LTA plays an important role in modulating the properties of the cell wall in Gram-positive bacteria, influencing the net charge of the cell wall. This Streptococcus pyogenes serotype M28 (strain MGAS6180) protein is D-alanine--D-alanyl carrier protein ligase.